We begin with the raw amino-acid sequence, 292 residues long: MERGPVVGAGRGAGARIRALLGGLVRVLLWVASALLYFGSEQAARLLGSPCLRRLYHAWLAAVVIFGPLLQFHVNPRTIFASHGNFFNIKFVNSAWGWTCTFLGGFVLLVVFLATRRVAVTARHLSRLVVGAAVWRGAGRAFLLIEDLTGSCFEPLPQGLLLHELPDRRSCLAAGHQWRGYTVSSHTFLLTFCCLLMAEEAAVFAKYLAHGLPAGAPLRLVFLLNVLLLGLWNFLLLCTVIYFHQYTHKVVGAAVGTFAWYLTYGSWYHQPWSPGSPGHGLFPRPHSIHKHN.

The Lumenal portion of the chain corresponds to 1–18; that stretch reads MERGPVVGAGRGAGARIR. The chain crosses the membrane as a helical span at residues 19-39; it reads ALLGGLVRVLLWVASALLYFG. Over 40–54 the chain is Cytoplasmic; the sequence is SEQAARLLGSPCLRR. The helical transmembrane segment at 55–75 threads the bilayer; that stretch reads LYHAWLAAVVIFGPLLQFHVN. The Lumenal segment spans residues 76–94; that stretch reads PRTIFASHGNFFNIKFVNS. A helical transmembrane segment spans residues 95–115; that stretch reads AWGWTCTFLGGFVLLVVFLAT. At 116 to 141 the chain is on the cytoplasmic side; the sequence is RRVAVTARHLSRLVVGAAVWRGAGRA. A helical membrane pass occupies residues 142-162; that stretch reads FLLIEDLTGSCFEPLPQGLLL. Residues 163 to 187 are Lumenal-facing; the sequence is HELPDRRSCLAAGHQWRGYTVSSHT. The active site involves H186. The chain crosses the membrane as a helical span at residues 188–208; it reads FLLTFCCLLMAEEAAVFAKYL. The Cytoplasmic segment spans residues 209 to 220; the sequence is AHGLPAGAPLRL. A helical transmembrane segment spans residues 221 to 241; it reads VFLLNVLLLGLWNFLLLCTVI. The Lumenal segment spans residues 242 to 249; it reads YFHQYTHK. H244 is an active-site residue. The chain crosses the membrane as a helical span at residues 250 to 270; sequence VVGAAVGTFAWYLTYGSWYHQ. The Cytoplasmic segment spans residues 271-292; that stretch reads PWSPGSPGHGLFPRPHSIHKHN.

Belongs to the FIT family. FIT1 subfamily.

It localises to the endoplasmic reticulum membrane. Its function is as follows. Plays an important role in the formation of lipid droplets (LDs) which are storage organelles at the center of lipid and energy homeostasis. Directly binds to diacylglycerol (DAGs) and triacylglycerol. This is Fat storage-inducing transmembrane protein 1 from Bos taurus (Bovine).